A 513-amino-acid polypeptide reads, in one-letter code: U3 small nucleolar RNA-associated protein 15 (513 aa).

6 WD repeats span residues 37–78 (KEHN…KTFS), 79–118 (RFKDVVYSASFRSDGKLLCAGDATGLVSVYDSYNPRTILL), 124–162 (THPTHVTKFHTQDNKILATASDDRVTRLWDISNAYEPQL), 166–206 (GATD…STPI), 210–247 (NHDQPVENVIAVSPTQIVSCGGNNFKVWDLTSNKKLYE), and 250–294 (NFNK…QVKF). A disordered region spans residues 332 to 354 (KKKEKRSSDKENAPASFNKNAKS).

As to quaternary structure, interacts with snoRNA U3. Interacts with MPP10. Component of the ribosomal small subunit (SSU) processome composed of at least 40 protein subunits and snoRNA U3. In the absence of snoRNA3, forms a complex with other t-UTPs. This complex can associate with pre-18S ribosomal RNAs.

The protein resides in the nucleus. The protein localises to the nucleolus. Involved in nucleolar processing of pre-18S ribosomal RNA. Required for optimal pre-ribosomal RNA transcription by RNA polymerase I together with a subset of U3 proteins required for transcription (t-UTPs). This is U3 small nucleolar RNA-associated protein 15 (UTP15) from Saccharomyces cerevisiae (strain ATCC 204508 / S288c) (Baker's yeast).